The primary structure comprises 548 residues: Probable malate:quinone oxidoreductase (548 aa).

Belongs to the MQO family. FAD serves as cofactor.

The catalysed reaction is (S)-malate + a quinone = a quinol + oxaloacetate. It participates in carbohydrate metabolism; tricarboxylic acid cycle; oxaloacetate from (S)-malate (quinone route): step 1/1. In Escherichia coli O127:H6 (strain E2348/69 / EPEC), this protein is Probable malate:quinone oxidoreductase.